We begin with the raw amino-acid sequence, 173 residues long: Small ribosomal subunit protein uS5 (173 aa).

An S5 DRBM domain is found at 17 to 80 (WQERVIQIRR…ADGKKQLIEV (64 aa)).

The protein belongs to the universal ribosomal protein uS5 family. Part of the 30S ribosomal subunit. Contacts proteins S4 and S8.

In terms of biological role, with S4 and S12 plays an important role in translational accuracy. Functionally, located at the back of the 30S subunit body where it stabilizes the conformation of the head with respect to the body. The chain is Small ribosomal subunit protein uS5 from Gloeothece citriformis (strain PCC 7424) (Cyanothece sp. (strain PCC 7424)).